We begin with the raw amino-acid sequence, 295 residues long: Ribosomal protein L11 methyltransferase (295 aa).

T150, G171, D193, and N232 together coordinate S-adenosyl-L-methionine.

This sequence belongs to the methyltransferase superfamily. PrmA family.

The protein localises to the cytoplasm. It carries out the reaction L-lysyl-[protein] + 3 S-adenosyl-L-methionine = N(6),N(6),N(6)-trimethyl-L-lysyl-[protein] + 3 S-adenosyl-L-homocysteine + 3 H(+). In terms of biological role, methylates ribosomal protein L11. The sequence is that of Ribosomal protein L11 methyltransferase from Methylobacillus flagellatus (strain ATCC 51484 / DSM 6875 / VKM B-1610 / KT).